The chain runs to 381 residues: Stearoyl-[acyl-carrier-protein] 9-desaturase 1, chloroplastic (381 aa).

Residues 1–26 (MQVVGTVRVSGCGAVVAPSRRQCRVS) constitute a chloroplast transit peptide. Glu-120, Glu-158, His-161, Glu-211, Glu-244, and His-247 together coordinate Fe cation.

It belongs to the fatty acid desaturase type 2 family. As to quaternary structure, homodimer. Requires Fe(2+) as cofactor.

The protein localises to the plastid. Its subcellular location is the chloroplast. The catalysed reaction is octadecanoyl-[ACP] + 2 reduced [2Fe-2S]-[ferredoxin] + O2 + 2 H(+) = (9Z)-octadecenoyl-[ACP] + 2 oxidized [2Fe-2S]-[ferredoxin] + 2 H2O. The protein operates within lipid metabolism; fatty acid metabolism. Converts stearoyl-ACP to oleoyl-ACP by introduction of a cis double bond between carbons 9 and 10 of the acyl chain. The sequence is that of Stearoyl-[acyl-carrier-protein] 9-desaturase 1, chloroplastic from Oryza sativa subsp. indica (Rice).